The primary structure comprises 477 residues: Peptidyl-prolyl cis-trans isomerase FKBP53 (477 aa).

Disordered regions lie at residues 104-135 and 153-366; these read DYEH…EDEQ and AAAP…QVRT. A compositionally biased stretch (basic residues) spans 264-274; sequence KSKKKKNQKEK. The span at 299–321 shows a compositional bias: polar residues; it reads ISQISSNTKAQDGTANNAMSESS. Basic and acidic residues predominate over residues 322 to 331; the sequence is KTPDKSAEKK. A compositionally biased stretch (polar residues) spans 351 to 366; it reads VEKQTPADSKSSQVRT. Residues 389–477 form the PPIase FKBP-type domain; it reads GKTVSVRYIG…TFDVELINVQ (89 aa).

The protein belongs to the FKBP-type PPIase family. Interacts with histone H3. As to expression, broadly expressed in leaves, flowers, stems and roots. Detected in root apical meristem region and pollen.

Its subcellular location is the nucleus. The catalysed reaction is [protein]-peptidylproline (omega=180) = [protein]-peptidylproline (omega=0). Its function is as follows. PPIases accelerate the folding of proteins. It catalyzes the cis-trans isomerization of proline imidic peptide bonds in oligopeptides. Histone chaperone possibly involved in H3/H4 deposition to the nucleosome. Associates with 18S rDNA chromatin and negatively regulates the level of its expression. This chain is Peptidyl-prolyl cis-trans isomerase FKBP53 (FKBP53), found in Arabidopsis thaliana (Mouse-ear cress).